Reading from the N-terminus, the 380-residue chain is Dynactin subunit 2 (380 aa).

A disordered region spans residues 1–40; the sequence is MADPKFQNLPGIAYDQPDVYETPDDPETDTSDYYEEEPEN. The span at 21–40 shows a compositional bias: acidic residues; that stretch reads ETPDDPETDTSDYYEEEPEN. Coiled-coil stretches lie at residues 100–135 and 353–377; these read VQKCQRLQIEMNELLNEVAALQVDRKIADEEKQSYD and ETFAQNLETITNKVAKVEQRVTAIS.

This sequence belongs to the dynactin subunit 2 family. In terms of assembly, subunit of dynactin, a multiprotein complex associated with dynein.

The protein localises to the cytoplasm. The protein resides in the cytoskeleton. Its subcellular location is the membrane. In terms of biological role, modulates cytoplasmic dynein binding to an organelle, and plays a role in prometaphase chromosome alignment and spindle organization during mitosis. May play a role in synapse formation during brain development. This is Dynactin subunit 2 from Drosophila pseudoobscura pseudoobscura (Fruit fly).